Consider the following 415-residue polypeptide: Phosphoglycerate kinase (415 aa).

Residues Val-22, Asp-23, Phe-24, Asn-25, Gln-37, Arg-38, Ser-61, His-62, Gly-64, Arg-65, Arg-121, His-168, and Arg-169 each coordinate (2R)-3-phosphoglycerate. Position 212 (Gly-212) interacts with ADP. Gly-212 is a binding site for CDP. AMP is bound by residues Ala-213 and Lys-214. Ala-213 is an ATP binding site. Residue Ala-213 coordinates Mg(2+). Mg(2+) is bound by residues Ala-216 and Asp-217. Asp-217 is a binding site for CDP. Lys-218 contributes to the AMP binding site. Residue Lys-218 participates in ATP binding. Gly-236 is an ADP binding site. Position 236 (Gly-236) interacts with CDP. Residues Gly-237 and Gly-311 each coordinate AMP. 2 residues coordinate ATP: Gly-237 and Gly-311. CDP-binding residues include Gly-336 and Phe-341. Residue Phe-341 participates in ADP binding. Glu-342 is an AMP binding site. ATP is bound by residues Glu-342, Asp-373, and Thr-374. Residue Asp-373 coordinates Mg(2+).

The protein belongs to the phosphoglycerate kinase family. Monomer. Mg(2+) is required as a cofactor.

It localises to the cytoplasm. It catalyses the reaction (2R)-3-phosphoglycerate + ATP = (2R)-3-phospho-glyceroyl phosphate + ADP. It participates in carbohydrate degradation; glycolysis; pyruvate from D-glyceraldehyde 3-phosphate: step 2/5. Functionally, enzyme of the glycolytic pathway. Glycolysis is essential in glial cells but not in neurons; neurons rely on the citric acid cycle for their energy needs, and on lactate and alanine secreted into the hemolymph by glial cells to fuel it. This chain is Phosphoglycerate kinase, found in Drosophila melanogaster (Fruit fly).